The primary structure comprises 132 residues: Actin-related protein 2/3 complex subunit 5A (132 aa).

Ala-2 bears the N-acetylalanine mark.

Belongs to the ARPC5 family. Component of the Arp2/3 complex composed of ARP2, ARP3, ARPC1/p41-ARC, ARPC2/p34-ARC, ARPC3/p21-ARC, ARPC4/p20-ARC and ARPC5/p16-ARC. In terms of tissue distribution, expressed at low levels in all tissues with a relatively highest expression in inflorescences.

Its subcellular location is the cytoplasm. The protein resides in the cytoskeleton. It is found in the cell projection. Functionally, functions as a component of the Arp2/3 complex which is involved in regulation of actin polymerization and together with an activating nucleation-promoting factor (NPF) mediates the formation of branched actin networks. Arp2/3 complex plays a critical role in the control of cell morphogenesis via the modulation of cell polarity development. This is Actin-related protein 2/3 complex subunit 5A (ARPC5A) from Arabidopsis thaliana (Mouse-ear cress).